The following is a 142-amino-acid chain: Cellulose/chitin binding protein BQ2027_MB2009 (142 aa).

Positions 1–37 are cleaved as a signal peptide; that stretch reads MAGLNIYVRRWRTALHATVSALIVAILGLAITPVASA. The region spanning 38–142 is the CBM2 domain; it reads ATARATLSVT…CLLNGQYPCT (105 aa).

It localises to the secreted. Its subcellular location is the cell wall. It is found in the cell membrane. Functionally, carbohydrate binding protein that binds chitin and cellulose. Lacks enzymatic activity and does not hydrolyze chitin and cellulose. May interact with mycobacterial biofilms, which are rich in cellulose, and play a role in biofilm formation. Could also act as an adhesin, improving the initial attachment to host cells and aiding M.bovis during the initial stages of infection. Its function is as follows. May act as a virulence factor that modulates host immune responses and contributes to host immune evasion. In Mycobacterium bovis (strain ATCC BAA-935 / AF2122/97), this protein is Cellulose/chitin binding protein BQ2027_MB2009.